We begin with the raw amino-acid sequence, 446 residues long: Putative F-box protein At1g32660 (446 aa).

Basic and acidic residues-rich tracts occupy residues 1-12 (MKRKDDDQEDRS) and 43-57 (NKLE…NPSK). Residues 1–57 (MKRKDDDQEDRSCSSASKLDPIPLDLKMATVPTKSHMKKSHQNKLEEDEKEDTNPSK) form a disordered region. The region spanning 57 to 107 (KLELDSLPLDLKMAILTRIPAKSLMKLRCVSKMWSSIIRSRGFIDSYYAIS) is the F-box domain.

The polypeptide is Putative F-box protein At1g32660 (Arabidopsis thaliana (Mouse-ear cress)).